Here is a 449-residue protein sequence, read N- to C-terminus: Sulfite exporter TauE/SafE family protein 5 (449 aa).

Helical transmembrane passes span 1–21, 57–77, 78–98, 101–121, 127–147, 150–170, 224–244, 259–279, 315–335, 353–373, 378–398, and 409–429; these read MKTL…NANQ, AIIM…AGGI, GGGG…LKTA, FSAF…LFGG, YDLA…GVIC, VLPE…SSLK, IPWT…VIYL, PCGV…LIFT, AMSF…GMLI, TSFM…LLGM, TAYV…VLVQ, and IIVF…TSFG.

It belongs to the 4-toluene sulfonate uptake permease (TSUP) (TC 2.A.102) family.

Its subcellular location is the membrane. This Arabidopsis thaliana (Mouse-ear cress) protein is Sulfite exporter TauE/SafE family protein 5.